The sequence spans 304 residues: L-lactate dehydrogenase (304 aa).

Residues V11, D32, R37, and 76–77 (GA) each bind NAD(+). Substrate contacts are provided by residues Q79, R85, and 117–120 (NPVD). S138 is an NAD(+) binding site. 143-146 (DSAR) contacts substrate. Beta-D-fructose 1,6-bisphosphate-binding residues include R148 and H163. H170 functions as the Proton acceptor in the catalytic mechanism. Position 225 (T225) interacts with substrate.

Belongs to the LDH/MDH superfamily. LDH family. As to quaternary structure, homotetramer.

Its subcellular location is the cytoplasm. It catalyses the reaction (S)-lactate + NAD(+) = pyruvate + NADH + H(+). Its pathway is fermentation; pyruvate fermentation to lactate; (S)-lactate from pyruvate: step 1/1. Its activity is regulated as follows. Allosterically activated by fructose 1,6-bisphosphate (FBP). In terms of biological role, catalyzes the conversion of lactate to pyruvate. The protein is L-lactate dehydrogenase of Deinococcus radiodurans (strain ATCC 13939 / DSM 20539 / JCM 16871 / CCUG 27074 / LMG 4051 / NBRC 15346 / NCIMB 9279 / VKM B-1422 / R1).